Here is a 354-residue protein sequence, read N- to C-terminus: Chorismate synthase (354 aa).

Arginine 48 contacts NADP(+). Residues 125-127 (RAS), alanine 280, 295-299 (KPIPS), and arginine 321 contribute to the FMN site.

The protein belongs to the chorismate synthase family. Homotetramer. FMNH2 is required as a cofactor.

It carries out the reaction 5-O-(1-carboxyvinyl)-3-phosphoshikimate = chorismate + phosphate. The protein operates within metabolic intermediate biosynthesis; chorismate biosynthesis; chorismate from D-erythrose 4-phosphate and phosphoenolpyruvate: step 7/7. Its function is as follows. Catalyzes the anti-1,4-elimination of the C-3 phosphate and the C-6 proR hydrogen from 5-enolpyruvylshikimate-3-phosphate (EPSP) to yield chorismate, which is the branch point compound that serves as the starting substrate for the three terminal pathways of aromatic amino acid biosynthesis. This reaction introduces a second double bond into the aromatic ring system. The chain is Chorismate synthase from Syntrophus aciditrophicus (strain SB).